The following is a 148-amino-acid chain: HTH-type transcriptional regulator Ptr1 (148 aa).

In terms of domain architecture, HTH asnC-type spans Leu2–Glu63. A DNA-binding region (H-T-H motif) is located at residues Phe21 to Lys40.

Homodimer.

Participates in positive as well as negative regulation of transcription. Binds to its own promoter. The chain is HTH-type transcriptional regulator Ptr1 (ptr1) from Methanocaldococcus jannaschii (strain ATCC 43067 / DSM 2661 / JAL-1 / JCM 10045 / NBRC 100440) (Methanococcus jannaschii).